The sequence spans 329 residues: Transcription factor MYB2 (329 aa).

2 HTH myb-type domains span residues glycine 17–leucine 69 and arginine 70–alanine 124. 2 DNA-binding regions (H-T-H motif) span residues tryptophan 45 to leucine 69 and tryptophan 97 to valine 120. 2 stretches are compositionally biased toward low complexity: residues alanine 155–glycine 166 and leucine 217–alanine 235. Disordered stretches follow at residues alanine 155–proline 189 and glycine 206–glutamine 242.

As to expression, highly expressed in leaves. Expressed in roots and shoots. Expressed at low levels in flowers.

It is found in the nucleus. Its function is as follows. Transcription factor involved in abiotic stress responses. Plays a regulatory role in tolerance to salt, cold, and drought stresses. Positively regulates the expression of genes involved in proline synthesis and transport, and genes involved in reactive oxygen species (ROS) scavenging such as peroxidase, superoxide dismutase and catalase during salt stress. Transactivates stress-related genes, including LEA3, RAB16A and DREB2A during salt stress. The polypeptide is Transcription factor MYB2 (Oryza sativa subsp. japonica (Rice)).